Consider the following 127-residue polypeptide: Large ribosomal subunit protein bL12 (127 aa).

The protein belongs to the bacterial ribosomal protein bL12 family. Homodimer. Part of the ribosomal stalk of the 50S ribosomal subunit. Forms a multimeric L10(L12)X complex, where L10 forms an elongated spine to which 2 to 4 L12 dimers bind in a sequential fashion. Binds GTP-bound translation factors.

Its function is as follows. Forms part of the ribosomal stalk which helps the ribosome interact with GTP-bound translation factors. Is thus essential for accurate translation. In Syntrophobacter fumaroxidans (strain DSM 10017 / MPOB), this protein is Large ribosomal subunit protein bL12.